Consider the following 527-residue polypeptide: T-complex protein 1 subunit beta (527 aa).

An N-acetylserine modification is found at serine 2.

It belongs to the TCP-1 chaperonin family. In terms of assembly, heterooligomeric complex of about 850 to 900 kDa that forms two stacked rings, 12 to 16 nm in diameter. Interacts with PLP2; this interaction leads to inhibition of CCT complex mediated actin folding.

It localises to the cytoplasm. In terms of biological role, molecular chaperone; assists the folding of proteins upon ATP hydrolysis. Known to play a role, in vitro, in the folding of actin and tubulin. In yeast may play a role in mitotic spindle formation. The polypeptide is T-complex protein 1 subunit beta (CCT2) (Saccharomyces cerevisiae (strain ATCC 204508 / S288c) (Baker's yeast)).